We begin with the raw amino-acid sequence, 353 residues long: UDP-N-acetylglucosamine--N-acetylmuramyl-(pentapeptide) pyrophosphoryl-undecaprenol N-acetylglucosamine transferase (353 aa).

UDP-N-acetyl-alpha-D-glucosamine is bound by residues 15-17 (TGG), N125, R165, S186, and Q286.

This sequence belongs to the glycosyltransferase 28 family. MurG subfamily.

The protein localises to the cell inner membrane. The catalysed reaction is di-trans,octa-cis-undecaprenyl diphospho-N-acetyl-alpha-D-muramoyl-L-alanyl-D-glutamyl-meso-2,6-diaminopimeloyl-D-alanyl-D-alanine + UDP-N-acetyl-alpha-D-glucosamine = di-trans,octa-cis-undecaprenyl diphospho-[N-acetyl-alpha-D-glucosaminyl-(1-&gt;4)]-N-acetyl-alpha-D-muramoyl-L-alanyl-D-glutamyl-meso-2,6-diaminopimeloyl-D-alanyl-D-alanine + UDP + H(+). The protein operates within cell wall biogenesis; peptidoglycan biosynthesis. Its function is as follows. Cell wall formation. Catalyzes the transfer of a GlcNAc subunit on undecaprenyl-pyrophosphoryl-MurNAc-pentapeptide (lipid intermediate I) to form undecaprenyl-pyrophosphoryl-MurNAc-(pentapeptide)GlcNAc (lipid intermediate II). In Chlamydia muridarum (strain MoPn / Nigg), this protein is UDP-N-acetylglucosamine--N-acetylmuramyl-(pentapeptide) pyrophosphoryl-undecaprenol N-acetylglucosamine transferase.